Here is a 349-residue protein sequence, read N- to C-terminus: Twinfilin-2 (349 aa).

Ala-2 bears the N-acetylalanine mark. 2 ADF-H domains span residues 4-139 (QTGI…KHLS) and 177-313 (GLAF…DEVH). Position 14 is an N6-acetyllysine (Lys-14). Tyr-309 is subject to Phosphotyrosine. The disordered stretch occupies residues 322–349 (AFAKPKGPGGKRGHKRLIRGPGENGEDS). Over residues 330-339 (GGKRGHKRLI) the composition is skewed to basic residues. Ser-349 is modified (phosphoserine).

Belongs to the actin-binding proteins ADF family. Twinfilin subfamily. In terms of assembly, interacts with G-actin; ADP-actin form and capping protein (CP). Isoform 2 interacts (via its N-terminal ADF-H domain) with G-actin (ADP-bound form) with significantly higher affinity than isoform 1. May also be able to interact with TWF1 and phosphoinositides, PI(4,5)P2. When bound to PI(4,5)P2, it is down-regulated. Interacts with MYO7A. Post-translationally, phosphorylated on both serine/threonine and tyrosine. Isoform 1 is ubiquitously expressed (at protein level). Isoform 2 expression is restricted to heart and skeletal muscle where it is the predominant form.

The protein localises to the cytoplasm. The protein resides in the cytoskeleton. It is found in the perinuclear region. Its subcellular location is the cell projection. It localises to the stereocilium. Functionally, actin-binding protein involved in motile and morphological processes. Inhibits actin polymerization, likely by sequestering G-actin. By capping the barbed ends of filaments, it also regulates motility. Seems to play an important role in clathrin-mediated endocytosis and distribution of endocytic organelles. May play a role in regulating the mature length of the middle and short rows of stereocilia. This chain is Twinfilin-2 (Twf2), found in Mus musculus (Mouse).